We begin with the raw amino-acid sequence, 645 residues long: Glucans biosynthesis glucosyltransferase H (645 aa).

The tract at residues methionine 1–proline 28 is disordered. 7 consecutive transmembrane segments (helical) span residues leucine 64–tryptophan 84, leucine 98–isoleucine 118, alanine 423–isoleucine 443, alanine 465–isoleucine 485, alanine 504–leucine 524, serine 558–proline 578, and leucine 580–valine 600.

The protein belongs to the glycosyltransferase 2 family. OpgH subfamily.

It is found in the cell inner membrane. It functions in the pathway glycan metabolism; osmoregulated periplasmic glucan (OPG) biosynthesis. Its function is as follows. Involved in the biosynthesis of osmoregulated periplasmic glucans (OPGs). This chain is Glucans biosynthesis glucosyltransferase H, found in Xanthomonas campestris pv. campestris (strain B100).